The sequence spans 236 residues: 2,3,4,5-tetrahydropyridine-2,6-dicarboxylate N-acetyltransferase (236 aa).

This sequence belongs to the transferase hexapeptide repeat family. DapH subfamily.

The catalysed reaction is (S)-2,3,4,5-tetrahydrodipicolinate + acetyl-CoA + H2O = L-2-acetamido-6-oxoheptanedioate + CoA. It functions in the pathway amino-acid biosynthesis; L-lysine biosynthesis via DAP pathway; LL-2,6-diaminopimelate from (S)-tetrahydrodipicolinate (acetylase route): step 1/3. Functionally, catalyzes the transfer of an acetyl group from acetyl-CoA to tetrahydrodipicolinate. The protein is 2,3,4,5-tetrahydropyridine-2,6-dicarboxylate N-acetyltransferase of Listeria monocytogenes serotype 4b (strain CLIP80459).